The following is a 310-amino-acid chain: Oxygen-dependent coproporphyrinogen-III oxidase (310 aa).

Serine 92 contacts substrate. Residues histidine 96 and histidine 106 each coordinate a divalent metal cation. Residue histidine 106 is the Proton donor of the active site. 108-110 (NVR) contacts substrate. Residues histidine 145 and histidine 175 each contribute to the a divalent metal cation site. The interval 240–275 (YVEFNLIWDRGTLFGLQSGGRTESILMSMPPLARWE) is important for dimerization. A substrate-binding site is contributed by 258–260 (GGR).

This sequence belongs to the aerobic coproporphyrinogen-III oxidase family. As to quaternary structure, homodimer. A divalent metal cation is required as a cofactor.

It is found in the cytoplasm. The enzyme catalyses coproporphyrinogen III + O2 + 2 H(+) = protoporphyrinogen IX + 2 CO2 + 2 H2O. It functions in the pathway porphyrin-containing compound metabolism; protoporphyrin-IX biosynthesis; protoporphyrinogen-IX from coproporphyrinogen-III (O2 route): step 1/1. Involved in the heme biosynthesis. Catalyzes the aerobic oxidative decarboxylation of propionate groups of rings A and B of coproporphyrinogen-III to yield the vinyl groups in protoporphyrinogen-IX. The protein is Oxygen-dependent coproporphyrinogen-III oxidase of Pectobacterium carotovorum subsp. carotovorum (strain PC1).